Here is a 535-residue protein sequence, read N- to C-terminus: MNISQEVARRRTFAIISHPDAGKTTLTEKLLLFAGAIQIAGSVKARKASRHASSDWMEIEKQRGISVASSVMQMEYRDCVINLLDTPGHQDFSEDTYRVLTAVDAALMVIDAANGVEPQTIRLLQVCRARNTPIITFINKMDREVREPLDLLSEIEGHLGMDAVPFSWPVGMGKSFGGVFDIRRDRMRVFRPGQERRSDDDDIIDGLDNPEIASRFGSAFEQANGEIELIQEAAPAFDREAFLAGRQTPVFFGSAINNFGVQEVLDALVEQAPPPGPRQALERLVEPQEPKFTGVVFKVQANMDPAHRDRVAFVRVSSGRFERGMRLKVARTNKEMRPNNVVSFLSQRRELLDEAYAGDVIGIPNHGVLQLGDVLTEGESLRFTGLPFFAPELFQAVEVKDPLRTKQLRIGLTQLGEEGAIQVFRPEAAGGTLLLGAVGQLQFEVVAHRLKTEYGVEARMLPSRYTMARWITSENPRALRKFMDANAAHIAYDVVDAAAFLIGSPAQLRVAEDLYPDVKFHAMREHGGQVFGSHA.

The tr-type G domain maps to 8 to 276; the sequence is ARRRTFAIIS…ALVEQAPPPG (269 aa). Residues 17-24, 85-89, and 139-142 contribute to the GTP site; these read SHPDAGKT, DTPGH, and NKMD.

Belongs to the TRAFAC class translation factor GTPase superfamily. Classic translation factor GTPase family. PrfC subfamily.

The protein localises to the cytoplasm. Its function is as follows. Increases the formation of ribosomal termination complexes and stimulates activities of RF-1 and RF-2. It binds guanine nucleotides and has strong preference for UGA stop codons. It may interact directly with the ribosome. The stimulation of RF-1 and RF-2 is significantly reduced by GTP and GDP, but not by GMP. This Bordetella petrii (strain ATCC BAA-461 / DSM 12804 / CCUG 43448) protein is Peptide chain release factor 3.